Here is a 397-residue protein sequence, read N- to C-terminus: Tryptophan synthase beta chain (397 aa).

Residue Lys-86 is modified to N6-(pyridoxal phosphate)lysine.

It belongs to the TrpB family. In terms of assembly, tetramer of two alpha and two beta chains. Pyridoxal 5'-phosphate is required as a cofactor.

The enzyme catalyses (1S,2R)-1-C-(indol-3-yl)glycerol 3-phosphate + L-serine = D-glyceraldehyde 3-phosphate + L-tryptophan + H2O. Its pathway is amino-acid biosynthesis; L-tryptophan biosynthesis; L-tryptophan from chorismate: step 5/5. In terms of biological role, the beta subunit is responsible for the synthesis of L-tryptophan from indole and L-serine. This chain is Tryptophan synthase beta chain, found in Aeromonas salmonicida (strain A449).